Reading from the N-terminus, the 283-residue chain is Phosphatidylserine decarboxylase proenzyme (283 aa).

Catalysis depends on charge relay system; for autoendoproteolytic cleavage activity residues Asp88, His145, and Ser248. Ser248 serves as the catalytic Schiff-base intermediate with substrate; via pyruvic acid; for decarboxylase activity. Ser248 is modified (pyruvic acid (Ser); by autocatalysis).

Belongs to the phosphatidylserine decarboxylase family. PSD-B subfamily. Prokaryotic type I sub-subfamily. In terms of assembly, heterodimer of a large membrane-associated beta subunit and a small pyruvoyl-containing alpha subunit. Pyruvate serves as cofactor. Is synthesized initially as an inactive proenzyme. Formation of the active enzyme involves a self-maturation process in which the active site pyruvoyl group is generated from an internal serine residue via an autocatalytic post-translational modification. Two non-identical subunits are generated from the proenzyme in this reaction, and the pyruvate is formed at the N-terminus of the alpha chain, which is derived from the carboxyl end of the proenzyme. The autoendoproteolytic cleavage occurs by a canonical serine protease mechanism, in which the side chain hydroxyl group of the serine supplies its oxygen atom to form the C-terminus of the beta chain, while the remainder of the serine residue undergoes an oxidative deamination to produce ammonia and the pyruvoyl prosthetic group on the alpha chain. During this reaction, the Ser that is part of the protease active site of the proenzyme becomes the pyruvoyl prosthetic group, which constitutes an essential element of the active site of the mature decarboxylase.

Its subcellular location is the cell membrane. The catalysed reaction is a 1,2-diacyl-sn-glycero-3-phospho-L-serine + H(+) = a 1,2-diacyl-sn-glycero-3-phosphoethanolamine + CO2. The protein operates within phospholipid metabolism; phosphatidylethanolamine biosynthesis; phosphatidylethanolamine from CDP-diacylglycerol: step 2/2. In terms of biological role, catalyzes the formation of phosphatidylethanolamine (PtdEtn) from phosphatidylserine (PtdSer). The polypeptide is Phosphatidylserine decarboxylase proenzyme (Acidovorax ebreus (strain TPSY) (Diaphorobacter sp. (strain TPSY))).